A 149-amino-acid chain; its full sequence is Putative pre-16S rRNA nuclease (149 aa).

The protein belongs to the YqgF nuclease family.

It localises to the cytoplasm. Could be a nuclease involved in processing of the 5'-end of pre-16S rRNA. This chain is Putative pre-16S rRNA nuclease, found in Pseudoalteromonas translucida (strain TAC 125).